The primary structure comprises 773 residues: Protein YhgF (773 aa).

Residues 651–720 enclose the S1 motif domain; the sequence is GMILEGAVTN…QRKRIALTMR (70 aa). Residues 721–773 are disordered; the sequence is LDEQPGETNARRGGGNERPQNNRPAAKPRGREAQPAGNSAMMDALAAAMGKKR.

This Escherichia coli (strain K12) protein is Protein YhgF (yhgF).